A 1368-amino-acid polypeptide reads, in one-letter code: Cingulin (1368 aa).

Residues 9-378 (MADQHIPVGQ…KQQRTVQSEF (370 aa)) are interaction with TJP3/ZO3 and myosin. Residues 9–435 (MADQHIPVGQ…EKLPSLQVQP (427 aa)) are head. A ZIM motif is present at residues 41–55 (QDSYGVAVRVQGIDG). 5 disordered regions span residues 71–264 (FGVQ…TKPL), 278–312 (GQVRGRTARRSQALKDERKRSQSLDGRKNYHDTAD), 1053–1080 (SRKEIGEAQKQAKEKTAEAERHQFNSSR), 1163–1183 (NRSRDQMEQQRAELNQERSRG), and 1308–1368 (QQEI…TSSC). Residues 83-97 (NASNTSPPNYQNYSS) are compositionally biased toward polar residues. An interaction with F-actin region spans residues 101-294 (GPSRSISSES…ARRSQALKDE (194 aa)). Composition is skewed to low complexity over residues 116–132 (PYGSRGYRPSSSHYSSA) and 200–211 (SQSSRDSAWSRS). The interval 150–295 (SSLPRPLQAS…RRSQALKDER (146 aa)) is interaction with TJP2/ZO2. The span at 228–256 (SATSQQSTSVSNKTKKNGLSTSSPSNQSN) shows a compositional bias: polar residues. The segment covering 290 to 312 (ALKDERKRSQSLDGRKNYHDTAD) has biased composition (basic and acidic residues). The interval 377–1368 (EFQLKSTPDL…TESNLQTSSC (992 aa)) is interaction with myosin. Residues 436-1330 (GEDTISLGSQ…VMEKESKRKP (895 aa)) adopt a coiled-coil conformation. Basic and acidic residues predominate over residues 1320–1338 (KVMEKESKRKPIRPAHDDD). The interval 1331–1368 (IRPAHDDDLSSDGEFGGPYDPSSITSLLTESNLQTSSC) is tail. The span at 1352-1368 (SSITSLLTESNLQTSSC) shows a compositional bias: polar residues.

Belongs to the cingulin family. Parallel homodimer. Interacts with TJP1/ZO1 and TJP2/ZO2 in vivo, and TJP3/ZO3, myosin and OCLN in vitro, possibly directly. Acts as an F-actin bundling protein in vitro. As to expression, localized on the cytoplasmic face of tight junctions of polarized epithelia and some endothelia.

It localises to the cell junction. Its subcellular location is the tight junction. Functionally, probably plays a role in the formation and regulation of the tight junction (TJ) paracellular permeability barrier, possibly by linking ZO proteins to the actomyosin cytoskeleton. This Xenopus laevis (African clawed frog) protein is Cingulin.